Here is a 419-residue protein sequence, read N- to C-terminus: Lipoyl synthase, mitochondrial (419 aa).

A mitochondrion-targeting transit peptide spans 1–26 (MAVCAGRLKCFGNPAVSLRTAASRAY). The span at 28–47 (TTTSPDPAIPSSSSASSSSA) shows a compositional bias: low complexity. Residues 28–61 (TTTSPDPAIPSSSSASSSSALPKRPQTSFRDKLN) form a disordered region. [4Fe-4S] cluster contacts are provided by Cys136, Cys141, Cys147, Cys167, Cys171, Cys174, and Ser382. The region spanning 150–371 (GSSKSAATAT…KDRALEMGFL (222 aa)) is the Radical SAM core domain. The disordered stretch occupies residues 399-419 (AESTGPESTNVPNVTPDAIVR).

This sequence belongs to the radical SAM superfamily. Lipoyl synthase family. [4Fe-4S] cluster is required as a cofactor.

It is found in the mitochondrion. It catalyses the reaction [[Fe-S] cluster scaffold protein carrying a second [4Fe-4S](2+) cluster] + N(6)-octanoyl-L-lysyl-[protein] + 2 oxidized [2Fe-2S]-[ferredoxin] + 2 S-adenosyl-L-methionine + 4 H(+) = [[Fe-S] cluster scaffold protein] + N(6)-[(R)-dihydrolipoyl]-L-lysyl-[protein] + 4 Fe(3+) + 2 hydrogen sulfide + 2 5'-deoxyadenosine + 2 L-methionine + 2 reduced [2Fe-2S]-[ferredoxin]. It functions in the pathway protein modification; protein lipoylation via endogenous pathway; protein N(6)-(lipoyl)lysine from octanoyl-[acyl-carrier-protein]: step 2/2. Its function is as follows. Catalyzes the radical-mediated insertion of two sulfur atoms into the C-6 and C-8 positions of the octanoyl moiety bound to the lipoyl domains of lipoate-dependent enzymes, thereby converting the octanoylated domains into lipoylated derivatives. The polypeptide is Lipoyl synthase, mitochondrial (Coccidioides posadasii (strain C735) (Valley fever fungus)).